The chain runs to 179 residues: Large ribosomal subunit protein uL5 (179 aa).

It belongs to the universal ribosomal protein uL5 family. In terms of assembly, part of the 50S ribosomal subunit; part of the 5S rRNA/L5/L18/L25 subcomplex. Contacts the 5S rRNA and the P site tRNA. Forms a bridge to the 30S subunit in the 70S ribosome.

Functionally, this is one of the proteins that bind and probably mediate the attachment of the 5S RNA into the large ribosomal subunit, where it forms part of the central protuberance. In the 70S ribosome it contacts protein S13 of the 30S subunit (bridge B1b), connecting the 2 subunits; this bridge is implicated in subunit movement. Contacts the P site tRNA; the 5S rRNA and some of its associated proteins might help stabilize positioning of ribosome-bound tRNAs. The protein is Large ribosomal subunit protein uL5 of Rickettsia africae (strain ESF-5).